We begin with the raw amino-acid sequence, 209 residues long: Thiamine-phosphate synthase (209 aa).

Residues Gln-36–Lys-40 and Asn-68 contribute to the 4-amino-2-methyl-5-(diphosphooxymethyl)pyrimidine site. Positions 69 and 88 each coordinate Mg(2+). 4-amino-2-methyl-5-(diphosphooxymethyl)pyrimidine is bound at residue Ser-107. Position 133 to 135 (Thr-133 to Ser-135) interacts with 2-[(2R,5Z)-2-carboxy-4-methylthiazol-5(2H)-ylidene]ethyl phosphate. Residue Lys-136 coordinates 4-amino-2-methyl-5-(diphosphooxymethyl)pyrimidine. 2-[(2R,5Z)-2-carboxy-4-methylthiazol-5(2H)-ylidene]ethyl phosphate contacts are provided by residues Gly-164 and Ile-184–Thr-185.

It belongs to the thiamine-phosphate synthase family. Mg(2+) serves as cofactor.

The enzyme catalyses 2-[(2R,5Z)-2-carboxy-4-methylthiazol-5(2H)-ylidene]ethyl phosphate + 4-amino-2-methyl-5-(diphosphooxymethyl)pyrimidine + 2 H(+) = thiamine phosphate + CO2 + diphosphate. It catalyses the reaction 2-(2-carboxy-4-methylthiazol-5-yl)ethyl phosphate + 4-amino-2-methyl-5-(diphosphooxymethyl)pyrimidine + 2 H(+) = thiamine phosphate + CO2 + diphosphate. It carries out the reaction 4-methyl-5-(2-phosphooxyethyl)-thiazole + 4-amino-2-methyl-5-(diphosphooxymethyl)pyrimidine + H(+) = thiamine phosphate + diphosphate. It functions in the pathway cofactor biosynthesis; thiamine diphosphate biosynthesis; thiamine phosphate from 4-amino-2-methyl-5-diphosphomethylpyrimidine and 4-methyl-5-(2-phosphoethyl)-thiazole: step 1/1. Its function is as follows. Condenses 4-methyl-5-(beta-hydroxyethyl)thiazole monophosphate (THZ-P) and 2-methyl-4-amino-5-hydroxymethyl pyrimidine pyrophosphate (HMP-PP) to form thiamine monophosphate (TMP). This is Thiamine-phosphate synthase from Shouchella clausii (strain KSM-K16) (Alkalihalobacillus clausii).